A 449-amino-acid chain; its full sequence is Tubulin alpha-1 chain (449 aa).

Residues glutamine 11, glutamate 71, serine 140, glycine 144, threonine 145, threonine 179, asparagine 206, and asparagine 228 each coordinate GTP. Glutamate 71 is a Mg(2+) binding site. Residue glutamate 254 is part of the active site.

Belongs to the tubulin family. Dimer of alpha and beta chains. A typical microtubule is a hollow water-filled tube with an outer diameter of 25 nm and an inner diameter of 15 nM. Alpha-beta heterodimers associate head-to-tail to form protofilaments running lengthwise along the microtubule wall with the beta-tubulin subunit facing the microtubule plus end conferring a structural polarity. Microtubules usually have 13 protofilaments but different protofilament numbers can be found in some organisms and specialized cells. Mg(2+) serves as cofactor.

The protein localises to the cytoplasm. It localises to the cytoskeleton. It carries out the reaction GTP + H2O = GDP + phosphate + H(+). In terms of biological role, tubulin is the major constituent of microtubules, a cylinder consisting of laterally associated linear protofilaments composed of alpha- and beta-tubulin heterodimers. Microtubules grow by the addition of GTP-tubulin dimers to the microtubule end, where a stabilizing cap forms. Below the cap, tubulin dimers are in GDP-bound state, owing to GTPase activity of alpha-tubulin. In Emericella nidulans (strain FGSC A4 / ATCC 38163 / CBS 112.46 / NRRL 194 / M139) (Aspergillus nidulans), this protein is Tubulin alpha-1 chain (tubA).